Here is a 301-residue protein sequence, read N- to C-terminus: Ribosomal RNA small subunit methyltransferase A (301 aa).

6 residues coordinate S-adenosyl-L-methionine: N18, L20, G45, E66, D91, and N112. Positions 267-301 (PPEAAPVKEKRRMAKNKMTEPANNNLNENSAPEVD) are disordered. The segment covering 287-301 (PANNNLNENSAPEVD) has biased composition (polar residues).

This sequence belongs to the class I-like SAM-binding methyltransferase superfamily. rRNA adenine N(6)-methyltransferase family. RsmA subfamily.

The protein resides in the cytoplasm. The catalysed reaction is adenosine(1518)/adenosine(1519) in 16S rRNA + 4 S-adenosyl-L-methionine = N(6)-dimethyladenosine(1518)/N(6)-dimethyladenosine(1519) in 16S rRNA + 4 S-adenosyl-L-homocysteine + 4 H(+). Specifically dimethylates two adjacent adenosines (A1518 and A1519) in the loop of a conserved hairpin near the 3'-end of 16S rRNA in the 30S particle. May play a critical role in biogenesis of 30S subunits. The polypeptide is Ribosomal RNA small subunit methyltransferase A (Colwellia psychrerythraea (strain 34H / ATCC BAA-681) (Vibrio psychroerythus)).